Here is a 322-residue protein sequence, read N- to C-terminus: Ribosomal RNA small subunit methyltransferase H (322 aa).

S-adenosyl-L-methionine-binding positions include 43-45 (GGY), Asp60, Phe86, Asp104, and Gln111.

The protein belongs to the methyltransferase superfamily. RsmH family.

It is found in the cytoplasm. It carries out the reaction cytidine(1402) in 16S rRNA + S-adenosyl-L-methionine = N(4)-methylcytidine(1402) in 16S rRNA + S-adenosyl-L-homocysteine + H(+). Specifically methylates the N4 position of cytidine in position 1402 (C1402) of 16S rRNA. The polypeptide is Ribosomal RNA small subunit methyltransferase H (Caulobacter sp. (strain K31)).